The following is a 329-amino-acid chain: UDP-N-acetylenolpyruvoylglucosamine reductase (329 aa).

An FAD-binding PCMH-type domain is found at 28-192 (RVGGPADLLC…ARVEVRLHPG (165 aa)). The active site involves R172. Catalysis depends on S221, which acts as the Proton donor. Residue E291 is part of the active site. The disordered stretch occupies residues 307-329 (DGHAAAGGGPGAASGGVRPPEAT). A compositionally biased stretch (gly residues) spans 311-320 (AAGGGPGAAS).

The protein belongs to the MurB family. It depends on FAD as a cofactor.

It localises to the cytoplasm. The catalysed reaction is UDP-N-acetyl-alpha-D-muramate + NADP(+) = UDP-N-acetyl-3-O-(1-carboxyvinyl)-alpha-D-glucosamine + NADPH + H(+). Its pathway is cell wall biogenesis; peptidoglycan biosynthesis. Cell wall formation. The polypeptide is UDP-N-acetylenolpyruvoylglucosamine reductase (Anaeromyxobacter dehalogenans (strain 2CP-1 / ATCC BAA-258)).